The primary structure comprises 38 residues: Potassium channel toxin alpha-KTx 3.12 (38 aa).

Cystine bridges form between C8/C28, C14/C33, and C18/C35. K38 bears the Lysine amide mark.

This sequence belongs to the short scorpion toxin superfamily. Potassium channel inhibitor family. Alpha-KTx 03 subfamily. Expressed by the venom gland.

The protein resides in the secreted. Potent inhibitor of voltage-dependent potassium channels, with a preference for Kv1.3/KCNA3 versus Kv1.2/KCNA2. This chain is Potassium channel toxin alpha-KTx 3.12, found in Androctonus amoreuxi (African fattail scorpion).